A 377-amino-acid polypeptide reads, in one-letter code: DNA replication and repair protein RecF (377 aa).

Position 30 to 37 (30 to 37 (GQNAQGKS)) interacts with ATP.

The protein belongs to the RecF family.

The protein resides in the cytoplasm. The RecF protein is involved in DNA metabolism; it is required for DNA replication and normal SOS inducibility. RecF binds preferentially to single-stranded, linear DNA. It also seems to bind ATP. The polypeptide is DNA replication and repair protein RecF (Cyanothece sp. (strain PCC 7425 / ATCC 29141)).